A 400-amino-acid polypeptide reads, in one-letter code: Ribose-phosphate pyrophosphokinase 2, chloroplastic (400 aa).

The transit peptide at 1–44 (MASLALTSPPSVKIPSYLSSSSSSLFSRSSISFRTTESRSRICV) directs the protein to the chloroplast. 4 residues coordinate Mg(2+): aspartate 214, histidine 216, aspartate 225, and aspartate 229. The segment at 300 to 315 (GKVAVMVDDIIDTAGT) is binding of phosphoribosylpyrophosphate.

The protein belongs to the ribose-phosphate pyrophosphokinase family.

The protein localises to the plastid. The protein resides in the chloroplast. It carries out the reaction D-ribose 5-phosphate + ATP = 5-phospho-alpha-D-ribose 1-diphosphate + AMP + H(+). This Arabidopsis thaliana (Mouse-ear cress) protein is Ribose-phosphate pyrophosphokinase 2, chloroplastic (PRS2).